Consider the following 209-residue polypeptide: Large ribosomal subunit protein uL3 (209 aa).

Residues 141-164 (RAVGSMGGSSDPSRTFKSKKMPGH) form a disordered region.

Belongs to the universal ribosomal protein uL3 family. As to quaternary structure, part of the 50S ribosomal subunit. Forms a cluster with proteins L14 and L19.

Functionally, one of the primary rRNA binding proteins, it binds directly near the 3'-end of the 23S rRNA, where it nucleates assembly of the 50S subunit. The protein is Large ribosomal subunit protein uL3 of Clostridium acetobutylicum (strain ATCC 824 / DSM 792 / JCM 1419 / IAM 19013 / LMG 5710 / NBRC 13948 / NRRL B-527 / VKM B-1787 / 2291 / W).